A 220-amino-acid chain; its full sequence is Glutathione S-transferase U26 (220 aa).

One can recognise a GST N-terminal domain in the interval 4-83 (DQVILLDYWP…YIDEVWSDAS (80 aa)). Glutathione contacts are provided by residues 14-15 (SM), 40-41 (VK), 54-55 (KI), and 67-68 (ES). A GST C-terminal domain is found at 89–210 (DPYQKSRARF…ADSDRIIEYV (122 aa)).

The protein belongs to the GST superfamily. Tau family.

It is found in the cytoplasm. The protein localises to the cytosol. The catalysed reaction is RX + glutathione = an S-substituted glutathione + a halide anion + H(+). In terms of biological role, in vitro, possesses glutathione S-transferase activity toward 1-chloro-2,4-dinitrobenzene (CDNB). May be involved in the conjugation of reduced glutathione to a wide number of exogenous and endogenous hydrophobic electrophiles and have a detoxification role against certain herbicides. The sequence is that of Glutathione S-transferase U26 (GSTU26) from Arabidopsis thaliana (Mouse-ear cress).